Consider the following 346-residue polypeptide: Ketol-acid reductoisomerase (NADP(+)) (346 aa).

The 141-residue stretch at 1–141 (KKNSILKKNQ…GAHHAGVLES (141 aa)) folds into the KARI N-terminal Rossmann domain. NADP(+) contacts are provided by residues Ser-11 and 41-43 (DKQ). Residue His-65 is part of the active site. Position 91 (Gly-91) interacts with NADP(+). KARI C-terminal knotted domains follow at residues 142–286 (SFVA…PEQE) and 287–346 (YYDH…NKVI). Mg(2+) is bound by residues Asp-150, Glu-154, Glu-322, and Glu-326.

This sequence belongs to the ketol-acid reductoisomerase family. Mg(2+) is required as a cofactor.

The enzyme catalyses (2R)-2,3-dihydroxy-3-methylbutanoate + NADP(+) = (2S)-2-acetolactate + NADPH + H(+). It carries out the reaction (2R,3R)-2,3-dihydroxy-3-methylpentanoate + NADP(+) = (S)-2-ethyl-2-hydroxy-3-oxobutanoate + NADPH + H(+). It functions in the pathway amino-acid biosynthesis; L-isoleucine biosynthesis; L-isoleucine from 2-oxobutanoate: step 2/4. It participates in amino-acid biosynthesis; L-valine biosynthesis; L-valine from pyruvate: step 2/4. Its function is as follows. Involved in the biosynthesis of branched-chain amino acids (BCAA). Catalyzes an alkyl-migration followed by a ketol-acid reduction of (S)-2-acetolactate (S2AL) to yield (R)-2,3-dihydroxy-isovalerate. In the isomerase reaction, S2AL is rearranged via a Mg-dependent methyl migration to produce 3-hydroxy-3-methyl-2-ketobutyrate (HMKB). In the reductase reaction, this 2-ketoacid undergoes a metal-dependent reduction by NADPH to yield (R)-2,3-dihydroxy-isovalerate. The polypeptide is Ketol-acid reductoisomerase (NADP(+)) (ilvC) (Buchnera aphidicola subsp. Uroleucon rurale).